The primary structure comprises 310 residues: Methionyl-tRNA formyltransferase (310 aa).

Residue 109-112 participates in (6S)-5,6,7,8-tetrahydrofolate binding; it reads SLLP.

The protein belongs to the Fmt family.

It carries out the reaction L-methionyl-tRNA(fMet) + (6R)-10-formyltetrahydrofolate = N-formyl-L-methionyl-tRNA(fMet) + (6S)-5,6,7,8-tetrahydrofolate + H(+). Functionally, attaches a formyl group to the free amino group of methionyl-tRNA(fMet). The formyl group appears to play a dual role in the initiator identity of N-formylmethionyl-tRNA by promoting its recognition by IF2 and preventing the misappropriation of this tRNA by the elongation apparatus. This chain is Methionyl-tRNA formyltransferase, found in Agathobacter rectalis (strain ATCC 33656 / DSM 3377 / JCM 17463 / KCTC 5835 / VPI 0990) (Eubacterium rectale).